A 99-amino-acid chain; its full sequence is Small integral membrane protein 14 (99 aa).

At 1–49 (MAEGGFDPCECICSHEHAMRRLINLLRQSQSYCTDTECLRELPGPSGDS) the chain is on the lumenal side. Residues 50 to 70 (GISITVILMAWMVIAVLLFLL) form a helical membrane-spanning segment. Topologically, residues 71–99 (RPPNLRGSSLPGKPSSPHSGQDPPAPPVD) are cytoplasmic. The tract at residues 77–99 (GSSLPGKPSSPHSGQDPPAPPVD) is disordered.

The protein localises to the endoplasmic reticulum membrane. This chain is Small integral membrane protein 14 (Smim14), found in Rattus norvegicus (Rat).